Consider the following 803-residue polypeptide: Ubiquitin carboxyl-terminal hydrolase 45 (803 aa).

Positions 1 to 34 (MRLKDPFSLKTADMTKRSNKPKKPRDEDSSDEVG) are disordered. Residues 36 to 153 (LTCQHVSRAV…QTLDFLQKQS (118 aa)) form a UBP-type zinc finger. The Zn(2+) site is built by Cys-38, His-40, Cys-62, Cys-65, Cys-85, Cys-88, Cys-93, His-100, His-104, His-113, Cys-126, and Cys-129. The 611-residue stretch at 192–802 (KGINNLGNTC…QAYLLFYEEL (611 aa)) folds into the USP domain. The active-site Nucleophile is Cys-201. The disordered stretch occupies residues 394-554 (PTNPARLGKS…LPSIRPQQGG (161 aa)). Over residues 403–417 (SGREQDSLTSHDDSL) the composition is skewed to basic and acidic residues. 2 stretches are compositionally biased toward polar residues: residues 419 to 440 (AHSQ…SRHS) and 469 to 480 (SYRTDTMGSQSD). Over residues 502–531 (SEWSPRIPSVSSHSSTSDKTSITTTLSTTT) the composition is skewed to low complexity. Positions 532–545 (HNPSLKSNPSSTPL) are enriched in polar residues. His-739 functions as the Proton acceptor in the catalytic mechanism.

This sequence belongs to the peptidase C19 family. Retina.

It is found in the photoreceptor inner segment. The protein resides in the cytoplasm. Its subcellular location is the nucleus. The enzyme catalyses Thiol-dependent hydrolysis of ester, thioester, amide, peptide and isopeptide bonds formed by the C-terminal Gly of ubiquitin (a 76-residue protein attached to proteins as an intracellular targeting signal).. Its function is as follows. Catalyzes the deubiquitination of SPDL1. Plays a role in the repair of UV-induced DNA damage via deubiquitination of ERCC1, promoting its recruitment to DNA damage sites. May be involved in the maintenance of photoreceptor function. May play a role in normal retinal development. In Danio rerio (Zebrafish), this protein is Ubiquitin carboxyl-terminal hydrolase 45.